The following is a 118-amino-acid chain: NLIQFGNMIQCANKGSRPSLDYADYGCYCGWGGSGTPVDELDRCCQTHDNCYEQAGKKGCFPKLTLYSWKCTGNAPTCNSKPGCKRFVCACDAAAAKCFAKAPYKKENYNIDTKKRCK.

7 disulfide bridges follow: cysteine 11–cysteine 71, cysteine 27–cysteine 117, cysteine 29–cysteine 45, cysteine 44–cysteine 98, cysteine 51–cysteine 91, cysteine 60–cysteine 84, and cysteine 78–cysteine 89. The Ca(2+) site is built by tyrosine 28, glycine 30, and glycine 32. Histidine 48 is a catalytic residue. A Ca(2+)-binding site is contributed by aspartate 49. Aspartate 92 is an active-site residue.

It belongs to the phospholipase A2 family. Group I subfamily. D49 sub-subfamily. The cofactor is Ca(2+). In terms of tissue distribution, expressed by the venom gland.

The protein resides in the secreted. The catalysed reaction is a 1,2-diacyl-sn-glycero-3-phosphocholine + H2O = a 1-acyl-sn-glycero-3-phosphocholine + a fatty acid + H(+). Functionally, PLA2 catalyzes the calcium-dependent hydrolysis of the 2-acyl groups in 3-sn-phosphoglycerides. The protein is Basic phospholipase A2 PA-12C of Pseudechis australis (Mulga snake).